The primary structure comprises 306 residues: Ribonuclease Z (306 aa).

7 residues coordinate Zn(2+): histidine 63, histidine 65, aspartate 67, histidine 68, histidine 141, aspartate 211, and histidine 269. Aspartate 67 serves as the catalytic Proton acceptor.

Belongs to the RNase Z family. Homodimer. Requires Zn(2+) as cofactor.

It carries out the reaction Endonucleolytic cleavage of RNA, removing extra 3' nucleotides from tRNA precursor, generating 3' termini of tRNAs. A 3'-hydroxy group is left at the tRNA terminus and a 5'-phosphoryl group is left at the trailer molecule.. Its function is as follows. Zinc phosphodiesterase, which displays some tRNA 3'-processing endonuclease activity. Probably involved in tRNA maturation, by removing a 3'-trailer from precursor tRNA. In Staphylococcus aureus (strain bovine RF122 / ET3-1), this protein is Ribonuclease Z.